Here is a 122-residue protein sequence, read N- to C-terminus: Large ribosomal subunit protein uL14c (122 aa).

It belongs to the universal ribosomal protein uL14 family. In terms of assembly, part of the 50S ribosomal subunit.

The protein resides in the plastid. Its subcellular location is the chloroplast. In terms of biological role, binds to 23S rRNA. This Lactuca sativa (Garden lettuce) protein is Large ribosomal subunit protein uL14c.